Here is a 108-residue protein sequence, read N- to C-terminus: C-C motif chemokine 19 (108 aa).

An N-terminal signal peptide occupies residues 1–25 (MAPRVTPLLAFSLLVLWTFPAPTLG). 2 disulfide bridges follow: cysteine 33/cysteine 59 and cysteine 34/cysteine 75. The N-linked (GlcNAc...) asparagine glycan is linked to asparagine 100.

Belongs to the intercrine beta (chemokine CC) family. In terms of assembly, interacts with TNFAIP6 (via Link domain). In terms of tissue distribution, highly expressed by dendritic cells in mesenteric and peripheral lymph nodes. Significant expression in spleen (T cell zone or periarteriolar lymphatic sheath) and Peyer patches. Low expression in thymus.

Its subcellular location is the secreted. Functionally, strongly chemotactic for naive (L-selectinhi) CD4 T-cells and for CD8 T-cells and weakly attractive for resting B-cells and memory (L-selectinlo) CD4 T-cells. May play a role in promoting encounters between recirculating T-cells and dendritic cells and in the migration of activated B-cells into the T-zone of secondary lymphoid tissues. Binds to chemokine receptor CCR7. Binds to atypical chemokine receptor ACKR4 and mediates the recruitment of beta-arrestin (ARRB1/2) to ACKR4. In Mus musculus (Mouse), this protein is C-C motif chemokine 19 (Ccl19).